We begin with the raw amino-acid sequence, 441 residues long: Pre-mRNA-splicing factor PRP46 (441 aa).

Disordered stretches follow at residues 1 to 22 and 81 to 107; these read MPVA…NEPS and MGAS…LTNL. The span at 83–107 shows a compositional bias: polar residues; sequence ASSSALTKHTPSASQPTTHDSLTNL. 7 WD repeats span residues 130–169, 172–211, 214–253, 256–295, 298–336, 339–379, and 388–427; these read GHQG…LRLT, GHIM…VVRH, GHLS…PVVV, GHKS…TMTT, HHKK…LVLN, DQNA…QSTQ, and ESEN…TAES.

The protein belongs to the WD repeat PRL1/PRL2 family. In terms of assembly, associated with the spliceosome.

The protein localises to the cytoplasm. It localises to the nucleus. Its function is as follows. Involved in pre-mRNA splicing and required for cell cycle progression at G2/M. This Yarrowia lipolytica (strain CLIB 122 / E 150) (Yeast) protein is Pre-mRNA-splicing factor PRP46 (PRP46).